We begin with the raw amino-acid sequence, 309 residues long: Probable RuBisCO transcriptional regulator (309 aa).

The HTH lysR-type domain maps to 5–62 (FTLQQLRILKAIATEKSFTRAAEVLFVSQPSLSKQIKTLESRLNISLLNRENNIVSLT). A DNA-binding region (H-T-H motif) is located at residues 22–41 (FTRAAEVLFVSQPSLSKQIK).

This sequence belongs to the LysR transcriptional regulatory family.

Its subcellular location is the plastid. The protein resides in the chloroplast. In terms of biological role, trans-acting transcriptional regulator of RuBisCO genes (rbcL and rbcS) expression. The polypeptide is Probable RuBisCO transcriptional regulator (rbcR) (Trieres chinensis (Marine centric diatom)).